We begin with the raw amino-acid sequence, 306 residues long: Putative syntaxin-131 (306 aa).

N-acetylmethionine is present on Met-1. Residues 1–276 (MNDLLKGSLE…AVKSQKSSRK (276 aa)) lie on the Cytoplasmic side of the membrane. Residues 11–23 (FSRDRSNRSDIES) are compositionally biased toward basic and acidic residues. Residues 11–35 (FSRDRSNRSDIESGHGPGNSGDLGL) are disordered. 2 coiled-coil regions span residues 35 to 72 (LSGF…VTKA) and 134 to 162 (KKKF…VERR). Residues 205 to 267 (LAEIQERHDA…QSGNNQLTKA (63 aa)) form the t-SNARE coiled-coil homology domain. A helical; Anchor for type IV membrane protein transmembrane segment spans residues 277–297 (WMCIAILILLIIIIITVISVL). The Vesicular portion of the chain corresponds to 298–306 (KPWTQKNGA).

This sequence belongs to the syntaxin family. In terms of assembly, part of the t-SNARE complex.

It localises to the membrane. Its function is as follows. Vesicle trafficking protein that functions in the secretory pathway. The sequence is that of Putative syntaxin-131 (SYP131) from Arabidopsis thaliana (Mouse-ear cress).